Here is a 296-residue protein sequence, read N- to C-terminus: Protoheme IX farnesyltransferase (296 aa).

Transmembrane regions (helical) follow at residues 27–47 (IMYL…GTIH), 48–68 (PLIG…AGAL), 98–118 (ALEC…LTVN), 120–140 (VSAI…TMVL), 148–168 (IVIG…SVTG), 175–195 (LLLF…LSLL), 219–239 (HIMG…LYVA), 242–262 (VLYE…AYCL), and 274–294 (CMGL…AIAL).

The protein belongs to the UbiA prenyltransferase family. Protoheme IX farnesyltransferase subfamily.

It is found in the cell inner membrane. It catalyses the reaction heme b + (2E,6E)-farnesyl diphosphate + H2O = Fe(II)-heme o + diphosphate. It participates in porphyrin-containing compound metabolism; heme O biosynthesis; heme O from protoheme: step 1/1. Its function is as follows. Converts heme B (protoheme IX) to heme O by substitution of the vinyl group on carbon 2 of heme B porphyrin ring with a hydroxyethyl farnesyl side group. The sequence is that of Protoheme IX farnesyltransferase from Anaplasma phagocytophilum (strain HZ).